A 417-amino-acid polypeptide reads, in one-letter code: Putative plant UBX domain-containing protein 14 (417 aa).

A UBX domain is found at aspartate 335–threonine 415.

The protein is Putative plant UBX domain-containing protein 14 of Arabidopsis thaliana (Mouse-ear cress).